Here is a 339-residue protein sequence, read N- to C-terminus: Phosphate acyltransferase (339 aa).

It belongs to the PlsX family. As to quaternary structure, homodimer. Probably interacts with PlsY.

The protein resides in the cytoplasm. The catalysed reaction is a fatty acyl-[ACP] + phosphate = an acyl phosphate + holo-[ACP]. The protein operates within lipid metabolism; phospholipid metabolism. Its function is as follows. Catalyzes the reversible formation of acyl-phosphate (acyl-PO(4)) from acyl-[acyl-carrier-protein] (acyl-ACP). This enzyme utilizes acyl-ACP as fatty acyl donor, but not acyl-CoA. This chain is Phosphate acyltransferase, found in Moorella thermoacetica (strain ATCC 39073 / JCM 9320).